The following is a 906-amino-acid chain: Protein translocase subunit SecA (906 aa).

Residues Gln-87, 105 to 109 (GEGKT), and Asp-512 each bind ATP. Residues 879 to 906 (REGEKIGRNDPCPCGSGQKYKQCHGKLS) form a disordered region. Residues Cys-890, Cys-892, Cys-901, and His-902 each contribute to the Zn(2+) site.

The protein belongs to the SecA family. As to quaternary structure, monomer and homodimer. Part of the essential Sec protein translocation apparatus which comprises SecA, SecYEG and auxiliary proteins SecDF-YajC and YidC. Zn(2+) is required as a cofactor.

It localises to the cell inner membrane. Its subcellular location is the cytoplasm. It catalyses the reaction ATP + H2O + cellular proteinSide 1 = ADP + phosphate + cellular proteinSide 2.. Its function is as follows. Part of the Sec protein translocase complex. Interacts with the SecYEG preprotein conducting channel. Has a central role in coupling the hydrolysis of ATP to the transfer of proteins into and across the cell membrane, serving both as a receptor for the preprotein-SecB complex and as an ATP-driven molecular motor driving the stepwise translocation of polypeptide chains across the membrane. The chain is Protein translocase subunit SecA from Shewanella frigidimarina (strain NCIMB 400).